The following is a 253-amino-acid chain: Phosphoribosylaminoimidazole-succinocarboxamide synthase (253 aa).

Belongs to the SAICAR synthetase family.

The enzyme catalyses 5-amino-1-(5-phospho-D-ribosyl)imidazole-4-carboxylate + L-aspartate + ATP = (2S)-2-[5-amino-1-(5-phospho-beta-D-ribosyl)imidazole-4-carboxamido]succinate + ADP + phosphate + 2 H(+). It functions in the pathway purine metabolism; IMP biosynthesis via de novo pathway; 5-amino-1-(5-phospho-D-ribosyl)imidazole-4-carboxamide from 5-amino-1-(5-phospho-D-ribosyl)imidazole-4-carboxylate: step 1/2. The sequence is that of Phosphoribosylaminoimidazole-succinocarboxamide synthase from Parvibaculum lavamentivorans (strain DS-1 / DSM 13023 / NCIMB 13966).